Here is a 138-residue protein sequence, read N- to C-terminus: Protein FAM136A (138 aa).

This sequence belongs to the FAM136 family.

The protein is Protein FAM136A (fam136a) of Xenopus tropicalis (Western clawed frog).